The chain runs to 508 residues: MGKKKNSKAYSEELTDTTRPLLEFRYGNPLFAIACHPEQSVIVSGLATGHMFCHKYNAAELKEAQLKRLRKHDAGSKDDRKKLWEVVEVPGVETSGVSLLWTTKRHKGSVRCICFDADGTHIYSVGTDNVLKKADTLTGKVVKKCVLDPGQNVKYTKLVKSATHPLVLLGDENGNVTVLNSESLEQTNLIKSIHNGDAINDIFHFAKKSVYRYISLGQTTLAHWDSRESNEGDFAIAADDKQAKRKVILSDDQEDEILCGTFVDPEDGEVLVCGMGEGVLTVWRPKKNGLADQLTRIKVKKNESIDCIVPTLEDDGCVWCGCSDGNIYKVHVNRGTIIEVRKHSKLDEVTFLDLDSEYRLLSGGLDKAKLWDSEKSEQLTPGSDADDRVSNSSPSAGKSSESDSNDSENDATSSGGSSDEDSSSDESEHSDASDVEEELVGLTREQIIAELDKDLVEESEDVEDVRSQRKRKHGADLPTNANGKKQKGKNIKPERSMKTHGIRRFEGL.

WD repeat units lie at residues 46–94 (LATG…GVET), 105–144 (RHKG…VVKK), 150–189 (GQNV…QTNL), 194–234 (HNGD…EGDF), 252–293 (DQED…LADQ), and 344–381 (SKLD…QLTP). Residues 372 to 508 (DSEKSEQLTP…THGIRRFEGL (137 aa)) are disordered. Positions 491–508 (IKPERSMKTHGIRRFEGL) are enriched in basic and acidic residues.

Belongs to the WD repeat WDR55 family.

Its subcellular location is the nucleus. The protein localises to the nucleolus. The sequence is that of WD repeat-containing protein JIP5 (JIP5) from Eremothecium gossypii (strain ATCC 10895 / CBS 109.51 / FGSC 9923 / NRRL Y-1056) (Yeast).